The sequence spans 187 residues: Transcriptional repressor NrdR (187 aa).

Positions 1 to 21 (MQCPYCQHTNSRVLESRSSEG) are disordered. The segment at 3 to 34 (CPYCQHTNSRVLESRSSEGGQSIRRRRECLNC) is a zinc-finger region. The 91-residue stretch at 49–139 (ITVIKHDGKK…VYGRFKGIKD (91 aa)) folds into the ATP-cone domain. 2 stretches are compositionally biased toward polar residues: residues 152-162 (ISSPMSQWSKS) and 170-187 (SQTSPCLSLTHNGSENSR). Residues 152–187 (ISSPMSQWSKSSTRDRDQSQTSPCLSLTHNGSENSR) form a disordered region.

The protein belongs to the NrdR family. It depends on Zn(2+) as a cofactor.

Negatively regulates transcription of bacterial ribonucleotide reductase nrd genes and operons by binding to NrdR-boxes. The sequence is that of Transcriptional repressor NrdR from Crocosphaera subtropica (strain ATCC 51142 / BH68) (Cyanothece sp. (strain ATCC 51142)).